A 308-amino-acid polypeptide reads, in one-letter code: Aspartate carbamoyltransferase catalytic subunit (308 aa).

Carbamoyl phosphate contacts are provided by Arg51 and Thr52. Position 80 (Lys80) interacts with L-aspartate. Arg101, His129, and Gln132 together coordinate carbamoyl phosphate. 2 residues coordinate L-aspartate: Arg162 and Arg224. 2 residues coordinate carbamoyl phosphate: Leu263 and Pro264.

This sequence belongs to the aspartate/ornithine carbamoyltransferase superfamily. ATCase family. As to quaternary structure, heterododecamer (2C3:3R2) of six catalytic PyrB chains organized as two trimers (C3), and six regulatory PyrI chains organized as three dimers (R2).

It carries out the reaction carbamoyl phosphate + L-aspartate = N-carbamoyl-L-aspartate + phosphate + H(+). The protein operates within pyrimidine metabolism; UMP biosynthesis via de novo pathway; (S)-dihydroorotate from bicarbonate: step 2/3. Functionally, catalyzes the condensation of carbamoyl phosphate and aspartate to form carbamoyl aspartate and inorganic phosphate, the committed step in the de novo pyrimidine nucleotide biosynthesis pathway. In Bacteroides fragilis (strain ATCC 25285 / DSM 2151 / CCUG 4856 / JCM 11019 / LMG 10263 / NCTC 9343 / Onslow / VPI 2553 / EN-2), this protein is Aspartate carbamoyltransferase catalytic subunit.